The following is a 534-amino-acid chain: MAQGLYVGGFVDVVSCPKLEQELYLDPDQVTDYLPVTEPLPITIEHLPETEVGWTLGLFQVSHGIFCTGAITSPAFLELASRLADTSHVARAPVKNLPKEPLLEILHTWLPGLSLSSIHPRELSQTPSGPVFQHVSLCALGRRRGTVAVYGHDAEWVVSRFSSVSKSERAHILQHVSSCRLEDLSTPNFVSPLETLMAKAIDASFIRDRLDLLKTDRGVASILSPAYLKASQFPVGIQAVTPPRPAMNSSGQEDIISIPKSAFLSMLQSSIDGMKTTAAKMSHTLSGPGLMGCGGQMFPTDHHLPSYVSNPAPPYGYAYKNPYDPWYYSPQLPGYRTGKRKRGAEDDEGHLFPGEEPAYHKDILSMSKNIAEIQSELKEMKLNGWHAGPPPSSSAAAAAVDPHYRPHANSAAPCQFPTMKEHGGTYVHPPIYVQAPHGQFQQAAPILFAQPHVSHPPVSTGLAVVGAPPAEPTPASSTQSIQQQAPETTHTPCAAVEKDAPTPNPTSNRVEASSRSSPKSKIRKMFCEELLNKQ.

Residues His46, Ser114, and His134 each act as charge relay system in the active site. The interaction with pAP stretch occupies residues 253-272 (EDIISIPKSAFLSMLQSSID). The Nuclear localization signal motif lies at 336–342 (RTGKRKR). 2 disordered regions span residues 337–356 (TGKR…PGEE) and 466–524 (GAPP…KIRK). The segment covering 479 to 491 (QSIQQQAPETTHT) has biased composition (polar residues). The interval 514–534 (SRSSPKSKIRKMFCEELLNKQ) is interaction with major capsid protein.

Belongs to the herpesviridae capsid scaffolding protein family. Homomultimer. Interacts with major capsid protein. As to quaternary structure, exists in a monomer-dimer equilibrium with the dimer being the active species. Post-translationally, capsid scaffolding protein is cleaved by assemblin after formation of the spherical procapsid. As a result, the capsid obtains its mature, icosahedral shape. Cleavages occur at two or more sites: release (R-site) and maturation (M-site).

It is found in the host cytoplasm. The protein localises to the host nucleus. It carries out the reaction Cleaves -Ala-|-Ser- and -Ala-|-Ala- bonds in the scaffold protein.. Its function is as follows. Acts as a scaffold protein by binding major capsid protein in the cytoplasm, inducing the nuclear localization of both proteins. Multimerizes in the nucleus such as major capsid protein forms the icosahedral T=16 capsid. Autocatalytic cleavage releases the assembly protein, and subsequently abolishes interaction with major capsid protein. Cleavages products are evicted from the capsid before or during DNA packaging. Functionally, protease that plays an essential role in virion assembly within the nucleus. Catalyzes the cleavage of the assembly protein after formation of the spherical procapsid. By that cleavage, the capsid matures and gains its icosahedral shape. The cleavage sites seem to include -Ala-Ser-, -Ala-Ala-, as well as Ala-Thr bonds. Assemblin and cleavages products are evicted from the capsid before or during DNA packaging. Plays a major role in capsid assembly. Acts as a scaffold protein by binding major capsid protein. Multimerizes in the nucleus such as major capsid protein forms the icosahedral T=16 capsid. Cleaved by assemblin after capsid completion. The cleavages products are evicted from the capsid before or during DNA packaging. The sequence is that of Capsid scaffolding protein (ORF17) from Human herpesvirus 8 type P (isolate GK18) (HHV-8).